The sequence spans 1129 residues: WD repeat and HMG-box DNA-binding protein 1 (1129 aa).

7 WD repeats span residues 11 to 50, 52 to 91, 92 to 131, 134 to 173, 184 to 223, 228 to 267, and 271 to 310; these read GHTE…DPKF, NVGE…GILT, RFTT…QQKT, GHDA…CAIS, INAK…HQFD, FISQ…CMER, and EKGY…SGKT. S333, S374, S383, and S387 each carry phosphoserine. K397 is covalently cross-linked (Glycyl lysine isopeptide (Lys-Gly) (interchain with G-Cter in SUMO2)). An N6-acetyllysine modification is found at K671. Phosphothreonine occurs at positions 824 and 826. Over residues 848 to 857 the composition is skewed to polar residues; the sequence is TATEWSQPRF. Disordered regions lie at residues 848–897 and 916–1017; these read TATE…SDVS and VSAS…ENQR. A compositionally biased stretch (acidic residues) spans 862-876; that stretch reads EEDAEDSGEADDEEK. S868 is subject to Phosphoserine. The span at 883–897 shows a compositional bias: polar residues; sequence GQNSFSKSTNSSDVS. Residues S917, S919, and S932 each carry the phosphoserine modification. 2 stretches are compositionally biased toward polar residues: residues 926-936 and 945-956; these read SMNSARSTNIL and KSTALSRTTNNE. K962 carries the post-translational modification N6-acetyllysine. Polar residues predominate over residues 974-987; the sequence is SAASYFQKRNSQTN. S984 bears the Phosphoserine mark. Residues 988–997 show a composition bias toward basic and acidic residues; it reads KTEEVKEENL. The segment at residues 1016 to 1079 is a DNA-binding region (HMG box); that stretch reads QRPKTGFQMW…KGETASEGTE (64 aa). S1041 and S1090 each carry phosphoserine. The interval 1068-1113 is disordered; the sequence is KAKGETASEGTEAKKRKRVVDESDETENQEEKAKENLNLSKKQKPL. A Glycyl lysine isopeptide (Lys-Gly) (interchain with G-Cter in SUMO1); alternate cross-link involves residue K1127. A Glycyl lysine isopeptide (Lys-Gly) (interchain with G-Cter in SUMO2); alternate cross-link involves residue K1127.

In terms of assembly, trimer. Interacts with the polymerase alpha catalytic subunit POLA1. Interacts with MCM10. Interacts with DNA2. Interacts with CDC45 and GINS2 subunit of GINS complex; these interactions associate WDHD1 with the CMG helicase complex.

It localises to the nucleus. The protein localises to the nucleoplasm. In terms of biological role, core replisome component that acts as a replication initiation factor. Binds directly to the CMG complex and functions as a hub to recruit additional proteins to the replication fork. This is WD repeat and HMG-box DNA-binding protein 1 from Homo sapiens (Human).